Consider the following 100-residue polypeptide: MDLSPREKDKLLIFTAGLLAERRLARGLKLNYPEAVALISAALLEGARDGRSVAELMHYGTTLLSREQVMEGVPEMIPDIQVEATFPDGTKLVTVHQPIA.

This sequence belongs to the urease gamma subunit family. Heterotrimer of UreA (gamma), UreB (beta) and UreC (alpha) subunits. Three heterotrimers associate to form the active enzyme.

The protein localises to the cytoplasm. The enzyme catalyses urea + 2 H2O + H(+) = hydrogencarbonate + 2 NH4(+). Its pathway is nitrogen metabolism; urea degradation; CO(2) and NH(3) from urea (urease route): step 1/1. In Pseudomonas aeruginosa (strain UCBPP-PA14), this protein is Urease subunit gamma.